Consider the following 348-residue polypeptide: D-erythrose-4-phosphate dehydrogenase (348 aa).

12–13 (RI) is an NAD(+) binding site. Residues 154 to 156 (SCT), arginine 200, 213 to 214 (TR), and arginine 236 contribute to the substrate site. Cysteine 155 functions as the Nucleophile in the catalytic mechanism. Asparagine 318 lines the NAD(+) pocket.

It belongs to the glyceraldehyde-3-phosphate dehydrogenase family. Epd subfamily. Homotetramer.

Its subcellular location is the cytoplasm. It carries out the reaction D-erythrose 4-phosphate + NAD(+) + H2O = 4-phospho-D-erythronate + NADH + 2 H(+). Its pathway is cofactor biosynthesis; pyridoxine 5'-phosphate biosynthesis; pyridoxine 5'-phosphate from D-erythrose 4-phosphate: step 1/5. Functionally, catalyzes the NAD-dependent conversion of D-erythrose 4-phosphate to 4-phosphoerythronate. In Erwinia tasmaniensis (strain DSM 17950 / CFBP 7177 / CIP 109463 / NCPPB 4357 / Et1/99), this protein is D-erythrose-4-phosphate dehydrogenase.